The following is a 486-amino-acid chain: Serine/threonine-protein kinase 32C (486 aa).

The segment at 1 to 56 (MRSGAERRGSSAAASPGSPPPGRARPAGSDAPSALPPPAAGQPRARDSGDVRSQPR) is disordered. Serine 10, serine 15, and serine 18 each carry phosphoserine. Residues 24 to 33 (ARPAGSDAPS) show a composition bias toward low complexity. In terms of domain architecture, Protein kinase spans 93 to 353 (FQILRAIGKG…LQDVQAAPAL (261 aa)). Residues 99–107 (IGKGSFGKV) and lysine 122 each bind ATP. The Proton acceptor role is filled by aspartate 216. Positions 396–405 (HKKKKRLAKN) are enriched in basic residues. Disordered stretches follow at residues 396 to 419 (HKKKKRLAKNKSRDNSRDSSQSEN) and 444 to 486 (SQDL…AGSG).

Belongs to the protein kinase superfamily. Ser/Thr protein kinase family. The cofactor is Mg(2+).

It catalyses the reaction L-seryl-[protein] + ATP = O-phospho-L-seryl-[protein] + ADP + H(+). The catalysed reaction is L-threonyl-[protein] + ATP = O-phospho-L-threonyl-[protein] + ADP + H(+). This chain is Serine/threonine-protein kinase 32C, found in Homo sapiens (Human).